The sequence spans 330 residues: Ribosomal RNA small subunit methyltransferase A (330 aa).

Residues His-29, Leu-31, Gly-56, Glu-77, and Asp-98 each coordinate S-adenosyl-L-methionine. Residues 115–158 (PVRSAGLPQAETAPKGLEPAGSSSQQGPRDWLRQTAGAAAPSRG) are disordered. Residue Asn-177 coordinates S-adenosyl-L-methionine.

It belongs to the class I-like SAM-binding methyltransferase superfamily. rRNA adenine N(6)-methyltransferase family. RsmA subfamily.

Its subcellular location is the cytoplasm. The enzyme catalyses adenosine(1518)/adenosine(1519) in 16S rRNA + 4 S-adenosyl-L-methionine = N(6)-dimethyladenosine(1518)/N(6)-dimethyladenosine(1519) in 16S rRNA + 4 S-adenosyl-L-homocysteine + 4 H(+). Specifically dimethylates two adjacent adenosines (A1518 and A1519) in the loop of a conserved hairpin near the 3'-end of 16S rRNA in the 30S particle. May play a critical role in biogenesis of 30S subunits. The polypeptide is Ribosomal RNA small subunit methyltransferase A (Polaromonas sp. (strain JS666 / ATCC BAA-500)).